Here is a 1563-residue protein sequence, read N- to C-terminus: Pentafunctional AROM polypeptide (1563 aa).

The segment at 1-382 (MAESSSNPTR…YEPKASVVED (382 aa)) is 3-dehydroquinate synthase. Residues 48–50 (DTN), 82–85 (EYSK), 113–115 (GGV), and Asp-118 contribute to the NAD(+) site. Arg-129 contributes to the 7-phospho-2-dehydro-3-deoxy-D-arabino-heptonate binding site. NAD(+) is bound at residue 138 to 139 (TT). The 7-phospho-2-dehydro-3-deoxy-D-arabino-heptonate site is built by Asp-145 and Lys-151. Position 160 (Lys-160) interacts with NAD(+). Asn-161 contributes to the 7-phospho-2-dehydro-3-deoxy-D-arabino-heptonate binding site. NAD(+) contacts are provided by residues 178–181 (FLNT) and Asn-189. Residue Glu-193 coordinates Zn(2+). Residues 193–196 (EVIK) and Lys-248 contribute to the 7-phospho-2-dehydro-3-deoxy-D-arabino-heptonate site. Glu-258 functions as the Proton acceptor; for 3-dehydroquinate synthase activity in the catalytic mechanism. 7-phospho-2-dehydro-3-deoxy-D-arabino-heptonate is bound by residues 262–266 (RNLLN) and His-269. His-269 is a Zn(2+) binding site. His-273 functions as the Proton acceptor; for 3-dehydroquinate synthase activity in the catalytic mechanism. 7-phospho-2-dehydro-3-deoxy-D-arabino-heptonate contacts are provided by His-285 and Lys-354. His-285 provides a ligand contact to Zn(2+). Positions 395-834 (VHAGVPKDLK…WDTMSNYFKS (440 aa)) are EPSP synthase. Cys-816 (for EPSP synthase activity) is an active-site residue. Residues 836–850 (LEGEEEPHSSHVSHE) show a composition bias toward basic and acidic residues. The interval 836 to 857 (LEGEEEPHSSHVSHEKPRKGNP) is disordered. Positions 857 to 1051 (PKSIFIIGMR…KKKPQSSFVS (195 aa)) are shikimate kinase. ATP is bound at residue 864-871 (GMRGAGKS). The interval 1052–1265 (LTVPNVSKAL…AAPGQLSAAE (214 aa)) is 3-dehydroquinase. The active-site Proton acceptor; for 3-dehydroquinate dehydratase activity is His-1168. Catalysis depends on Lys-1196, which acts as the Schiff-base intermediate with substrate; for 3-dehydroquinate dehydratase activity. The shikimate dehydrogenase stretch occupies residues 1278-1563 (PRSFYLFGKP…TDAQAAVMGN (286 aa)).

It in the N-terminal section; belongs to the sugar phosphate cyclases superfamily. Dehydroquinate synthase family. In the 2nd section; belongs to the EPSP synthase family. This sequence in the 3rd section; belongs to the shikimate kinase family. The protein in the 4th section; belongs to the type-I 3-dehydroquinase family. It in the C-terminal section; belongs to the shikimate dehydrogenase family. Homodimer. Zn(2+) is required as a cofactor.

The protein resides in the cytoplasm. The enzyme catalyses 7-phospho-2-dehydro-3-deoxy-D-arabino-heptonate = 3-dehydroquinate + phosphate. It carries out the reaction 3-dehydroquinate = 3-dehydroshikimate + H2O. It catalyses the reaction shikimate + NADP(+) = 3-dehydroshikimate + NADPH + H(+). The catalysed reaction is shikimate + ATP = 3-phosphoshikimate + ADP + H(+). The enzyme catalyses 3-phosphoshikimate + phosphoenolpyruvate = 5-O-(1-carboxyvinyl)-3-phosphoshikimate + phosphate. It participates in metabolic intermediate biosynthesis; chorismate biosynthesis; chorismate from D-erythrose 4-phosphate and phosphoenolpyruvate: step 2/7. It functions in the pathway metabolic intermediate biosynthesis; chorismate biosynthesis; chorismate from D-erythrose 4-phosphate and phosphoenolpyruvate: step 3/7. The protein operates within metabolic intermediate biosynthesis; chorismate biosynthesis; chorismate from D-erythrose 4-phosphate and phosphoenolpyruvate: step 4/7. Its pathway is metabolic intermediate biosynthesis; chorismate biosynthesis; chorismate from D-erythrose 4-phosphate and phosphoenolpyruvate: step 5/7. It participates in metabolic intermediate biosynthesis; chorismate biosynthesis; chorismate from D-erythrose 4-phosphate and phosphoenolpyruvate: step 6/7. In terms of biological role, the AROM polypeptide catalyzes 5 consecutive enzymatic reactions in prechorismate polyaromatic amino acid biosynthesis. The sequence is that of Pentafunctional AROM polypeptide from Sordaria macrospora (strain ATCC MYA-333 / DSM 997 / K(L3346) / K-hell).